The chain runs to 200 residues: MITVVESSFLTSASALSQTPPPKNSEVVFIGRSNVGKSTLINLIVDSKGLAKSSSTPGKTQLINYFETIWKRGEERIPLWLVDLPGFGYAKVSKEMRKDWGEKLIHFLQERRSIKLFVQLIDARHPDLAIDAEAWAMIGAIKRGDQKVIRVFTKMDKLNRNDQKKLQQRYPDACFTAMLGKEGIASVRERVLKDVLGEEA.

Residues 23–197 (KNSEVVFIGR…RERVLKDVLG (175 aa)) enclose the EngB-type G domain. GTP contacts are provided by residues 31–38 (GRSNVGKS), 58–62 (GKTQL), 83–86 (DLPG), 153–156 (TKMD), and 175–177 (FTA). Mg(2+)-binding residues include Ser38 and Thr60.

Belongs to the TRAFAC class TrmE-Era-EngA-EngB-Septin-like GTPase superfamily. EngB GTPase family. Mg(2+) is required as a cofactor.

Its function is as follows. Necessary for normal cell division and for the maintenance of normal septation. In Wolinella succinogenes (strain ATCC 29543 / DSM 1740 / CCUG 13145 / JCM 31913 / LMG 7466 / NCTC 11488 / FDC 602W) (Vibrio succinogenes), this protein is Probable GTP-binding protein EngB.